We begin with the raw amino-acid sequence, 973 residues long: Putative helicase 022R (973 aa).

The segment at 473–502 is disordered; that stretch reads AKARGGRDSGNEDDEEDSATDEDDSNPWDS. Acidic residues predominate over residues 483–498; sequence NEDDEEDSATDEDDSN. An SF3 helicase domain is found at 658–840; the sequence is GPVTKLLAFF…FVTPGTTAPA (183 aa). An ATP-binding site is contributed by 702–709; the sequence is GTGNNGKT.

The polypeptide is Putative helicase 022R (Frog virus 3 (isolate Goorha) (FV-3)).